A 567-amino-acid polypeptide reads, in one-letter code: Proline--tRNA ligase (567 aa).

Belongs to the class-II aminoacyl-tRNA synthetase family. ProS type 1 subfamily. Homodimer.

It localises to the cytoplasm. It carries out the reaction tRNA(Pro) + L-proline + ATP = L-prolyl-tRNA(Pro) + AMP + diphosphate. Catalyzes the attachment of proline to tRNA(Pro) in a two-step reaction: proline is first activated by ATP to form Pro-AMP and then transferred to the acceptor end of tRNA(Pro). As ProRS can inadvertently accommodate and process non-cognate amino acids such as alanine and cysteine, to avoid such errors it has two additional distinct editing activities against alanine. One activity is designated as 'pretransfer' editing and involves the tRNA(Pro)-independent hydrolysis of activated Ala-AMP. The other activity is designated 'posttransfer' editing and involves deacylation of mischarged Ala-tRNA(Pro). The misacylated Cys-tRNA(Pro) is not edited by ProRS. This chain is Proline--tRNA ligase, found in Staphylococcus epidermidis (strain ATCC 35984 / DSM 28319 / BCRC 17069 / CCUG 31568 / BM 3577 / RP62A).